Consider the following 240-residue polypeptide: Aliphatic sulfonates import ATP-binding protein SsuB 2 (240 aa).

Residues 2 to 218 form the ABC transporter domain; the sequence is VRTRELRRGF…RHSAPEFIHA (217 aa). Residue 34 to 41 participates in ATP binding; it reads GRSGSGKS.

This sequence belongs to the ABC transporter superfamily. Aliphatic sulfonates importer (TC 3.A.1.17.2) family. As to quaternary structure, the complex is composed of two ATP-binding proteins (SsuB), two transmembrane proteins (SsuC) and a solute-binding protein (SsuA).

It localises to the cell membrane. It carries out the reaction ATP + H2O + aliphatic sulfonate-[sulfonate-binding protein]Side 1 = ADP + phosphate + aliphatic sulfonateSide 2 + [sulfonate-binding protein]Side 1.. Part of the ABC transporter complex SsuABC involved in aliphatic sulfonates import. Responsible for energy coupling to the transport system. In Nocardia farcinica (strain IFM 10152), this protein is Aliphatic sulfonates import ATP-binding protein SsuB 2.